A 465-amino-acid chain; its full sequence is Adenosylhomocysteinase (465 aa).

Substrate is bound by residues T56, D131, and E191. 192 to 194 (TTT) serves as a coordination point for NAD(+). 2 residues coordinate substrate: K221 and D225. Residues N226, 255 to 260 (GYGDVG), E278, N313, 334 to 336 (IGH), and N379 each bind NAD(+).

It belongs to the adenosylhomocysteinase family. The cofactor is NAD(+).

It is found in the cytoplasm. The enzyme catalyses S-adenosyl-L-homocysteine + H2O = L-homocysteine + adenosine. It functions in the pathway amino-acid biosynthesis; L-homocysteine biosynthesis; L-homocysteine from S-adenosyl-L-homocysteine: step 1/1. In terms of biological role, may play a key role in the regulation of the intracellular concentration of adenosylhomocysteine. The sequence is that of Adenosylhomocysteinase from Bartonella tribocorum (strain CIP 105476 / IBS 506).